A 206-amino-acid chain; its full sequence is Pyrrolidone-carboxylate peptidase (206 aa).

Catalysis depends on residues Glu-78, Cys-141, and His-165.

This sequence belongs to the peptidase C15 family. In terms of assembly, homotetramer.

The protein resides in the cytoplasm. It carries out the reaction Release of an N-terminal pyroglutamyl group from a polypeptide, the second amino acid generally not being Pro.. Its function is as follows. Removes 5-oxoproline from various penultimate amino acid residues except L-proline. The polypeptide is Pyrrolidone-carboxylate peptidase (Thermococcus kodakarensis (strain ATCC BAA-918 / JCM 12380 / KOD1) (Pyrococcus kodakaraensis (strain KOD1))).